We begin with the raw amino-acid sequence, 344 residues long: Probable dual-specificity RNA methyltransferase RlmN (344 aa).

Glu-90 acts as the Proton acceptor in catalysis. Residues 96-326 enclose the Radical SAM core domain; the sequence is YKYGNAICIS…VTIRRELGSS (231 aa). Residues Cys-103 and Cys-331 are joined by a disulfide bond. 3 residues coordinate [4Fe-4S] cluster: Cys-110, Cys-114, and Cys-117. S-adenosyl-L-methionine-binding positions include 157–158, Ser-189, 212–214, and Asn-288; these read GE and SLH. Residue Cys-331 is the S-methylcysteine intermediate of the active site.

It belongs to the radical SAM superfamily. RlmN family. The cofactor is [4Fe-4S] cluster.

Its subcellular location is the cytoplasm. It catalyses the reaction adenosine(2503) in 23S rRNA + 2 reduced [2Fe-2S]-[ferredoxin] + 2 S-adenosyl-L-methionine = 2-methyladenosine(2503) in 23S rRNA + 5'-deoxyadenosine + L-methionine + 2 oxidized [2Fe-2S]-[ferredoxin] + S-adenosyl-L-homocysteine. The enzyme catalyses adenosine(37) in tRNA + 2 reduced [2Fe-2S]-[ferredoxin] + 2 S-adenosyl-L-methionine = 2-methyladenosine(37) in tRNA + 5'-deoxyadenosine + L-methionine + 2 oxidized [2Fe-2S]-[ferredoxin] + S-adenosyl-L-homocysteine. In terms of biological role, specifically methylates position 2 of adenine 2503 in 23S rRNA and position 2 of adenine 37 in tRNAs. This chain is Probable dual-specificity RNA methyltransferase RlmN, found in Caldicellulosiruptor saccharolyticus (strain ATCC 43494 / DSM 8903 / Tp8T 6331).